A 414-amino-acid polypeptide reads, in one-letter code: uncharacterized protein (414 aa).

The helical transmembrane segment at 367 to 384 (TTWALTLICIACILLFFV) threads the bilayer.

It is found in the virion membrane. This is an uncharacterized protein from Human cytomegalovirus (strain Merlin) (HHV-5).